The following is a 148-amino-acid chain: Secretory phospholipase A2 (148 aa).

The signal sequence occupies residues 1-23 (MKLSVLLALGASSLAAAAPAATA). Asn61 is a glycosylation site (N-linked (GlcNAc...) asparagine). Residues Cys62 and Cys78 are joined by a disulfide bond. His81 is a catalytic residue. Asp82 contacts Ca(2+).

This sequence belongs to the phospholipase A2 family. Requires Ca(2+) as cofactor.

The protein resides in the secreted. The catalysed reaction is a 1,2-diacyl-sn-glycero-3-phosphocholine + H2O = a 1-acyl-sn-glycero-3-phosphocholine + a fatty acid + H(+). Secretory phospholipase that catalyzes the calcium-dependent hydrolysis of the 2-acyl groups in 3-sn-phosphoglycerides. Increases the ability to utilize host-derived nutrients and lipids, and promotes lipid dropplets accumulation. Plays a role in virulence. The polypeptide is Secretory phospholipase A2 (Arthroderma benhamiae (strain ATCC MYA-4681 / CBS 112371) (Trichophyton mentagrophytes)).